A 328-amino-acid polypeptide reads, in one-letter code: Nucleotide-binding protein BL0705 (328 aa).

Residues 1-35 (MNQQTTNRDTGEAAATNAPANSATSTSTPDNQPTP) are disordered. Residues 13-29 (AAATNAPANSATSTSTP) show a composition bias toward low complexity. 46–53 (GMSGAGRS) is a binding site for ATP. 101-104 (DVRS) lines the GTP pocket.

It belongs to the RapZ-like family.

Its function is as follows. Displays ATPase and GTPase activities. The chain is Nucleotide-binding protein BL0705 from Bifidobacterium longum (strain NCC 2705).